Reading from the N-terminus, the 126-residue chain is UPF0102 protein BH12350 (126 aa).

Belongs to the UPF0102 family.

The protein is UPF0102 protein BH12350 of Bartonella henselae (strain ATCC 49882 / DSM 28221 / CCUG 30454 / Houston 1) (Rochalimaea henselae).